Here is a 258-residue protein sequence, read N- to C-terminus: MGLFDRIKRVVSSNLNDLVNKAEDPEKMLEQAILEMQEDLVQLRQGVAQAIAAQKRSEKQYNDAQNEINKWQRNAQLALQKGDENLARQALERKKTYTDTSAALKASLDTQSTQVETLKRNLIQLESKISEAKTKKEMLKARITTAKAQEQLQGMVRGMNTSSAMSAFERMEEKVLMQESRAQALGELAGADLETQFAQLEGGSDVDDELAALKAQMLPPATPVTQAQLPPQQETTPAKSNEVVDAELDSLRKQLDQL.

The disordered stretch occupies residues 217 to 258 (MLPPATPVTQAQLPPQQETTPAKSNEVVDAELDSLRKQLDQL). Polar residues predominate over residues 223 to 239 (PVTQAQLPPQQETTPAK). Positions 249-258 (DSLRKQLDQL) are enriched in basic and acidic residues.

The protein belongs to the PspA/Vipp/IM30 family. As to quaternary structure, polymerizes to form rings, filaments and ribbons. Rings are formed by stacked rungs that tilt to give a dome-shaped curvature. Rings form with symmetries ranging from C11 (55 subunits) to C17 (119 subunits).

It localises to the cell inner membrane. In terms of biological role, a membrane remodeling protein capable of forming rings and/or filaments on membranes, which then curve and tubulate the bilayer. Rings will form on liposomes, altering their positive curvature so the lipid bilayer is remodeled into a negative curve as the membrane enters the ring. Ring stacks of varying lengths can be seen joining isolated liposomes. A lipid monolayer can be drawn into the center of the rings. Required for thylakoid formation. The polypeptide is Membrane-associated protein Vipp1 (Nostoc punctiforme (strain ATCC 29133 / PCC 73102)).